The primary structure comprises 332 residues: Putative potassium channel regulatory protein sup-10 (332 aa).

Positions 1–18 (MRYAVFIFLIVLIDLIYC) are cleaved as a signal peptide. The Extracellular segment spans residues 19–301 (WNSKRSFFIP…EISERNKRPA (283 aa)). Residues Asn-61, Asn-107, and Asn-166 are each glycosylated (N-linked (GlcNAc...) asparagine). A helical membrane pass occupies residues 302–322 (FVLVGLTGGIAVIILAFSIFW). Residues 323 to 332 (GLNGSGFNKD) lie on the Cytoplasmic side of the membrane.

As to quaternary structure, may form a complex with sup-9 and unc-93 where sup-10 and unc-93 act as regulatory subunits of the two pore potassium channel sup-9. Sup-10 may regulate sup-9 via sup-18. As to expression, low levels in body-wall muscles, eight vulval muscles, intestinal muscles and anal depressor muscle.

The protein resides in the membrane. Its function is as follows. May contribute to coordination of muscle contraction as regulatory subunit of a nonessential potassium channel complex. The polypeptide is Putative potassium channel regulatory protein sup-10 (Caenorhabditis elegans).